The following is a 100-amino-acid chain: Large ribosomal subunit protein uL23 (100 aa).

Belongs to the universal ribosomal protein uL23 family. Part of the 50S ribosomal subunit. Contacts protein L29, and trigger factor when it is bound to the ribosome.

Its function is as follows. One of the early assembly proteins it binds 23S rRNA. One of the proteins that surrounds the polypeptide exit tunnel on the outside of the ribosome. Forms the main docking site for trigger factor binding to the ribosome. The sequence is that of Large ribosomal subunit protein uL23 from Xylella fastidiosa (strain M23).